A 253-amino-acid chain; its full sequence is Small ribosomal subunit protein uS3 (253 aa).

Residues 39-109 form the KH type-2 domain; that stretch reads IRNYVLARLK…EVKIDVVEVI (71 aa). Residues 220–253 form a disordered region; that stretch reads DEMKKMKDRRNDGGAKGRDSRDNRSKRRSRSKRS. Over residues 221–242 the composition is skewed to basic and acidic residues; that stretch reads EMKKMKDRRNDGGAKGRDSRDN. A compositionally biased stretch (basic residues) spans 243-253; that stretch reads RSKRRSRSKRS.

This sequence belongs to the universal ribosomal protein uS3 family. Part of the 30S ribosomal subunit. Forms a tight complex with proteins S10 and S14.

In terms of biological role, binds the lower part of the 30S subunit head. Binds mRNA in the 70S ribosome, positioning it for translation. The sequence is that of Small ribosomal subunit protein uS3 from Chlorobium chlorochromatii (strain CaD3).